A 235-amino-acid polypeptide reads, in one-letter code: Phosphoribosylaminoimidazole-succinocarboxamide synthase (235 aa).

Belongs to the SAICAR synthetase family.

The enzyme catalyses 5-amino-1-(5-phospho-D-ribosyl)imidazole-4-carboxylate + L-aspartate + ATP = (2S)-2-[5-amino-1-(5-phospho-beta-D-ribosyl)imidazole-4-carboxamido]succinate + ADP + phosphate + 2 H(+). Its pathway is purine metabolism; IMP biosynthesis via de novo pathway; 5-amino-1-(5-phospho-D-ribosyl)imidazole-4-carboxamide from 5-amino-1-(5-phospho-D-ribosyl)imidazole-4-carboxylate: step 1/2. The sequence is that of Phosphoribosylaminoimidazole-succinocarboxamide synthase from Chlorobaculum tepidum (strain ATCC 49652 / DSM 12025 / NBRC 103806 / TLS) (Chlorobium tepidum).